Here is a 160-residue protein sequence, read N- to C-terminus: Transcriptional repressor NrdR (160 aa).

The segment at 3-34 (CPFCRHADTQVVDSRVSEDGATIRRRRRCPAC) is a zinc-finger region. The ATP-cone domain maps to 49 to 139 (PSVVKKDGSR…VYRRFEDVSE (91 aa)).

The protein belongs to the NrdR family. Zn(2+) is required as a cofactor.

Its function is as follows. Negatively regulates transcription of bacterial ribonucleotide reductase nrd genes and operons by binding to NrdR-boxes. The chain is Transcriptional repressor NrdR from Paraburkholderia phytofirmans (strain DSM 17436 / LMG 22146 / PsJN) (Burkholderia phytofirmans).